We begin with the raw amino-acid sequence, 214 residues long: Cytochrome b (214 aa).

The next 4 helical transmembrane spans lie at 31-51 (FGSM…FLAI), 75-96 (WIMQ…YIHI), 111-131 (WLSG…GYVL), and 176-196 (FFAL…IHIL). 2 residues coordinate heme b: histidine 81 and histidine 95. The heme b site is built by histidine 180 and histidine 194. Residue histidine 199 coordinates a ubiquinone.

It belongs to the cytochrome b family. The cytochrome bc1 complex contains 3 respiratory subunits (MT-CYB, CYC1 and UQCRFS1), 2 core proteins (UQCRC1 and UQCRC2) and probably 6 low-molecular weight proteins. Heme b serves as cofactor.

The protein localises to the mitochondrion inner membrane. Component of the ubiquinol-cytochrome c reductase complex (complex III or cytochrome b-c1 complex) that is part of the mitochondrial respiratory chain. The b-c1 complex mediates electron transfer from ubiquinol to cytochrome c. Contributes to the generation of a proton gradient across the mitochondrial membrane that is then used for ATP synthesis. This Bothrops atrox (Barba amarilla) protein is Cytochrome b (MT-CYB).